The following is a 633-amino-acid chain: Alpha-amylase (633 aa).

Catalysis depends on E123, which acts as the Nucleophile. D214 (proton donor) is an active-site residue.

The protein belongs to the glycosyl hydrolase 57 family.

The catalysed reaction is Endohydrolysis of (1-&gt;4)-alpha-D-glucosidic linkages in polysaccharides containing three or more (1-&gt;4)-alpha-linked D-glucose units.. This chain is Alpha-amylase (amyA), found in Pyrococcus horikoshii (strain ATCC 700860 / DSM 12428 / JCM 9974 / NBRC 100139 / OT-3).